Here is a 1002-residue protein sequence, read N- to C-terminus: Probable transport protein MmpL10 (1002 aa).

12 consecutive transmembrane segments (helical) span residues 1 to 21 (MVGC…SLAE), 177 to 197 (IAVM…TMLL), 199 to 219 (LVTI…VSLV), 228 to 248 (AIVL…VFLI), 268 to 288 (AMMS…ITFL), 306 to 326 (AIGI…ILVL), 358 to 378 (YLGA…LAHF), 806 to 826 (IVAV…RAIV), 835 to 855 (VVIS…VFLG), 862 to 882 (VPGL…MLLA), 901 to 921 (VRCT…SMSG), and 923 to 943 (LFSS…GILI).

The protein belongs to the resistance-nodulation-cell division (RND) (TC 2.A.6) family. MmpL subfamily.

It localises to the cell membrane. This Mycobacterium bovis (strain ATCC BAA-935 / AF2122/97) protein is Probable transport protein MmpL10 (mmpL10).